The following is a 158-amino-acid chain: Endoribonuclease YbeY (158 aa).

H117, H121, and H127 together coordinate Zn(2+).

This sequence belongs to the endoribonuclease YbeY family. It depends on Zn(2+) as a cofactor.

Its subcellular location is the cytoplasm. Its function is as follows. Single strand-specific metallo-endoribonuclease involved in late-stage 70S ribosome quality control and in maturation of the 3' terminus of the 16S rRNA. This is Endoribonuclease YbeY from Psychromonas ingrahamii (strain DSM 17664 / CCUG 51855 / 37).